The following is a 149-amino-acid chain: Putative eggshell protein (149 aa).

6 repeat units span residues 1 to 5 (YGYDK), 6 to 10 (YGYDK), 11 to 15 (YGYDK), 16 to 20 (YGYDK), 21 to 25 (YGYDK), and 26 to 30 (YGYEK). Positions 1 to 64 (YGYDKYGYDK…YGYDKYGDDK (64 aa)) are 13 X 5 AA approximate tandem repeats of Y-G-Y-[DE]-K. The 7; truncated repeat unit spans residues 31–34 (GYDK). A run of 3 repeats spans residues 35-39 (YGYDK), 40-44 (YGYEK), and 45-49 (YGYDK). The 11; approximate repeat unit spans residues 50–54 (YGNEK). Repeat 12 spans residues 55–59 (YGYDK). Residues 60–64 (YGDDK) form a 13; approximate repeat. The span at 105–124 (YRKDHDKHDHDEHDHHDDHH) shows a compositional bias: basic and acidic residues. Residues 105–149 (YRKDHDKHDHDEHDHHDDHHDHRHHHHEHDHHHHHEHDHKNGKGY) are disordered. Residues 125 to 141 (DHRHHHHEHDHHHHHEH) show a composition bias toward basic residues.

This is Putative eggshell protein from Schistosoma mansoni (Blood fluke).